The following is a 250-amino-acid chain: MAEIAPLRVQLIAKTEFSAPPDVPWSTDADGGAALVEFAGRACYQSWDKPNPRTATNAGYVRHIIDVGHFSVLEHASVSFYITGISRSCTHELIRHRHFSYSQLSQRYVPEHDSQVVAPPGIEDDPELLEIFTEAADAGRAAYTELLTRLEARLADQPNATLRRKQARQAARAVLPNATETRIVVTGNYRAWRHFIAMRASEHADLEIRRLAIECLRQLVDAAPQVFSDFEIVVLADGTEVATSPLATEV.

In terms of domain architecture, ThyX spans Leu-7–Val-233. FAD contacts are provided by residues Ser-71, Arg-95–Arg-97, and Gln-103. DUMP-binding positions include Glu-92–Arg-95, Gln-103–Arg-107, and Arg-172. The ThyX motif motif lies at Arg-95–Ser-105. Residues Asn-188 to Arg-190 and His-194 each bind FAD. A dUMP-binding site is contributed by Arg-199. Arg-199 functions as the Involved in ionization of N3 of dUMP, leading to its activation in the catalytic mechanism.

Belongs to the thymidylate synthase ThyX family. In terms of assembly, homotetramer. FAD serves as cofactor.

The enzyme catalyses dUMP + (6R)-5,10-methylene-5,6,7,8-tetrahydrofolate + NADPH + H(+) = dTMP + (6S)-5,6,7,8-tetrahydrofolate + NADP(+). Its pathway is pyrimidine metabolism; dTTP biosynthesis. In terms of biological role, catalyzes the reductive methylation of 2'-deoxyuridine-5'-monophosphate (dUMP) to 2'-deoxythymidine-5'-monophosphate (dTMP) while utilizing 5,10-methylenetetrahydrofolate (mTHF) as the methyl donor, and NADPH and FADH(2) as the reductant. This is Flavin-dependent thymidylate synthase from Mycolicibacterium vanbaalenii (strain DSM 7251 / JCM 13017 / BCRC 16820 / KCTC 9966 / NRRL B-24157 / PYR-1) (Mycobacterium vanbaalenii).